The chain runs to 979 residues: Translation initiation factor IF-2 (979 aa).

The interval 68–392 (VKQKQGTPAS…SRAAQDAMEL (325 aa)) is disordered. 3 stretches are compositionally biased toward basic and acidic residues: residues 102 to 179 (QDMR…KPEE), 217 to 229 (EMEK…EVFR), and 260 to 273 (TKED…DADG). Residues 309–326 (PSGNKNNNRPAQQQSNAS) show a composition bias toward polar residues. Positions 347-356 (DVQRQVKETL) are enriched in basic and acidic residues. In terms of domain architecture, tr-type G spans 478–646 (ARPPIVTVMG…KVLLEADILE (169 aa)). The tract at residues 487–494 (GHVDHGKT) is G1. 487–494 (GHVDHGKT) serves as a coordination point for GTP. Residues 512-516 (GITQH) are G2. The interval 534 to 537 (DTPG) is G3. Residues 534 to 538 (DTPGH) and 588 to 591 (NKID) each bind GTP. Residues 588 to 591 (NKID) form a G4 region. The tract at residues 624–626 (SAK) is G5.

This sequence belongs to the TRAFAC class translation factor GTPase superfamily. Classic translation factor GTPase family. IF-2 subfamily.

It localises to the cytoplasm. Its function is as follows. One of the essential components for the initiation of protein synthesis. Protects formylmethionyl-tRNA from spontaneous hydrolysis and promotes its binding to the 30S ribosomal subunits. Also involved in the hydrolysis of GTP during the formation of the 70S ribosomal complex. This is Translation initiation factor IF-2 from Porphyromonas gingivalis (strain ATCC 33277 / DSM 20709 / CIP 103683 / JCM 12257 / NCTC 11834 / 2561).